A 118-amino-acid chain; its full sequence is Large ribosomal subunit protein bL19 (118 aa).

This sequence belongs to the bacterial ribosomal protein bL19 family.

In terms of biological role, this protein is located at the 30S-50S ribosomal subunit interface and may play a role in the structure and function of the aminoacyl-tRNA binding site. The sequence is that of Large ribosomal subunit protein bL19 from Campylobacter concisus (strain 13826).